Here is a 335-residue protein sequence, read N- to C-terminus: Cytoskeleton protein RodZ (335 aa).

The Cytoplasmic segment spans residues 1–111; it reads MNTEATHDQN…LGKRRKKRDG (111 aa). The HTH cro/C1-type domain occupies 19-71; that stretch reads LRNAREQLGLSQQAVAERLCLKVSTVRDIEEDKAPADLASTFLRGYIRSYARL. Residues 30 to 49 constitute a DNA-binding region (H-T-H motif); it reads QQAVAERLCLKVSTVRDIEE. A helical; Signal-anchor for type II membrane protein membrane pass occupies residues 112-132; sequence WLMTFTWLVLFVVIGLSGAWW. Topologically, residues 133–335 are periplasmic; it reads WQDHKAQQEE…TLNAEQSPAQ (203 aa). Polar residues predominate over residues 148-164; the sequence is DQSSAELNNNQSQSVPL. A disordered region spans residues 148 to 239; the sequence is DQSSAELNNN…PDGAAPLPTD (92 aa). 2 stretches are compositionally biased toward low complexity: residues 165–205 and 217–239; these read DTST…DPQQ and DTAA…LPTD.

It belongs to the RodZ family.

It is found in the cell inner membrane. Cytoskeletal protein that is involved in cell-shape control through regulation of the length of the long axis. This is Cytoskeleton protein RodZ from Escherichia coli O6:K15:H31 (strain 536 / UPEC).